The following is a 256-amino-acid chain: Imidazole glycerol phosphate synthase subunit HisF (256 aa).

Catalysis depends on residues D11 and D130.

This sequence belongs to the HisA/HisF family. In terms of assembly, heterodimer of HisH and HisF.

The protein localises to the cytoplasm. The enzyme catalyses 5-[(5-phospho-1-deoxy-D-ribulos-1-ylimino)methylamino]-1-(5-phospho-beta-D-ribosyl)imidazole-4-carboxamide + L-glutamine = D-erythro-1-(imidazol-4-yl)glycerol 3-phosphate + 5-amino-1-(5-phospho-beta-D-ribosyl)imidazole-4-carboxamide + L-glutamate + H(+). The protein operates within amino-acid biosynthesis; L-histidine biosynthesis; L-histidine from 5-phospho-alpha-D-ribose 1-diphosphate: step 5/9. Its function is as follows. IGPS catalyzes the conversion of PRFAR and glutamine to IGP, AICAR and glutamate. The HisF subunit catalyzes the cyclization activity that produces IGP and AICAR from PRFAR using the ammonia provided by the HisH subunit. This Prochlorococcus marinus (strain NATL1A) protein is Imidazole glycerol phosphate synthase subunit HisF.